The following is a 641-amino-acid chain: Protein GAMETE EXPRESSED 3 (641 aa).

The first 29 residues, 1–29 (MVAFRFVYIPLPFFFFFFFFFVFFSGVSQ), serve as a signal peptide directing secretion. Residues 441–461 (IIWFLLFEFVIMVLFAALVRF) traverse the membrane as a helical segment. The interval 570–627 (ITIFQTPSDESSSEESYRDEHYDDVADDEHDEDDLDRKQKGKLLAHSEGSSNDGDGIA) is disordered. A compositionally biased stretch (basic and acidic residues) spans 584–593 (ESYRDEHYDD). Residues 594-603 (VADDEHDEDD) are compositionally biased toward acidic residues.

In terms of tissue distribution, expressed in mature siliques and in pollen, mainly in the sperm cells. Detected in the egg cell within the female gametophyte.

The protein localises to the cell membrane. Its function is as follows. Required for micropylar pollen tube guidance. Plays a role during early embryo patterning. The sequence is that of Protein GAMETE EXPRESSED 3 (GEX3) from Arabidopsis thaliana (Mouse-ear cress).